The sequence spans 215 residues: Cytochrome b6 (215 aa).

A helical transmembrane segment spans residues 32-52; sequence IFYCLGGITLTCFIVQVATGF. Cysteine 35 is a binding site for heme c. Heme b contacts are provided by histidine 86 and histidine 100. The next 3 helical transmembrane spans lie at 90–110, 116–136, and 186–206; these read ASMM…TGGF, LTWV…VTGY, and AHTF…FVMI. Heme b is bound by residues histidine 187 and histidine 202.

The protein belongs to the cytochrome b family. PetB subfamily. As to quaternary structure, the 4 large subunits of the cytochrome b6-f complex are cytochrome b6, subunit IV (17 kDa polypeptide, PetD), cytochrome f and the Rieske protein, while the 4 small subunits are PetG, PetL, PetM and PetN. The complex functions as a dimer. The cofactor is heme b. Heme c serves as cofactor.

The protein localises to the plastid. Its subcellular location is the chloroplast thylakoid membrane. Component of the cytochrome b6-f complex, which mediates electron transfer between photosystem II (PSII) and photosystem I (PSI), cyclic electron flow around PSI, and state transitions. The sequence is that of Cytochrome b6 from Emiliania huxleyi (Coccolithophore).